A 271-amino-acid chain; its full sequence is 4,5-DOPA dioxygenase extradiol (271 aa).

Residues histidine 22, histidine 57, histidine 177, and histidine 234 each contribute to the Zn(2+) site.

It belongs to the DODA-type extradiol aromatic ring-opening dioxygenase family. Monomer. Requires Zn(2+) as cofactor.

Its subcellular location is the cytoplasm. The enzyme catalyses L-dopa + O2 = 4-(L-alanin-3-yl)-2-hydroxy-cis,cis-muconate 6-semialdehyde + H(+). Its function is as follows. In vitro, opens the cyclic ring of dihydroxy-phenylalanine (DOPA) between carbons 4 and 5, thus producing an unstable seco-DOPA that rearranges nonenzymatically to betalamic acid. The physiological substrate is unknown. The protein is 4,5-DOPA dioxygenase extradiol (ygiD) of Escherichia coli (strain K12).